Consider the following 206-residue polypeptide: N-(5'-phosphoribosyl)anthranilate isomerase (206 aa).

It belongs to the TrpF family.

It carries out the reaction N-(5-phospho-beta-D-ribosyl)anthranilate = 1-(2-carboxyphenylamino)-1-deoxy-D-ribulose 5-phosphate. It participates in amino-acid biosynthesis; L-tryptophan biosynthesis; L-tryptophan from chorismate: step 3/5. This is N-(5'-phosphoribosyl)anthranilate isomerase from Pseudomonas putida (strain GB-1).